The primary structure comprises 302 residues: uncharacterized protein (302 aa).

Residues 13–89 form the S4 RNA-binding domain; sequence QTLFKFLKKT…VNLDIVYEDN (77 aa). Residue aspartate 141 is part of the active site.

This sequence belongs to the pseudouridine synthase RluA family.

It catalyses the reaction a uridine in RNA = a pseudouridine in RNA. This is an uncharacterized protein from Mycoplasma capricolum subsp. capricolum (strain California kid / ATCC 27343 / NCTC 10154).